Reading from the N-terminus, the 114-residue chain is MSYPEANVLVTTAETIPGYTIVEVLGIVVGITVRSRGLGGNLMAALRSLVGGEIKEFVEMAEQARMQALIRMIDRAKELGANAVVNIRFDSNELNQSMDEIIAYGTAVKVAKNS.

Belongs to the UPF0145 family.

The protein is UPF0145 protein YG5714_0873 of Saccharolobus islandicus (strain Y.G.57.14 / Yellowstone #1) (Sulfolobus islandicus).